The primary structure comprises 498 residues: ATP synthase subunit beta, chloroplastic (498 aa).

A Phosphothreonine modification is found at Thr-6. Phosphoserine is present on Ser-13. Position 172 to 179 (Gly-172 to Thr-179) interacts with ATP.

Belongs to the ATPase alpha/beta chains family. In terms of assembly, F-type ATPases have 2 components, CF(1) - the catalytic core - and CF(0) - the membrane proton channel. CF(1) has five subunits: alpha(3), beta(3), gamma(1), delta(1), epsilon(1). CF(0) has four main subunits: a(1), b(1), b'(1) and c(9-12).

It is found in the plastid. The protein localises to the chloroplast thylakoid membrane. The catalysed reaction is ATP + H2O + 4 H(+)(in) = ADP + phosphate + 5 H(+)(out). In terms of biological role, produces ATP from ADP in the presence of a proton gradient across the membrane. The catalytic sites are hosted primarily by the beta subunits. The polypeptide is ATP synthase subunit beta, chloroplastic (Draba nemorosa (Woodland whitlowgrass)).